Consider the following 197-residue polypeptide: Tyrosine-protein phosphatase-like protein OCA2 (197 aa).

The Tyrosine-protein phosphatase domain maps to 10–160 (SPVVSTDVSL…FETNLKIPRN (151 aa)). Ser-181 carries the post-translational modification Phosphoserine.

It belongs to the protein-tyrosine phosphatase family.

It is found in the cytoplasm. Functionally, required for normal growth in the presence of linoleic acid hydroperoxide (LoaOOH). This is Tyrosine-protein phosphatase-like protein OCA2 (OCA2) from Saccharomyces cerevisiae (strain ATCC 204508 / S288c) (Baker's yeast).